A 376-amino-acid chain; its full sequence is 23S rRNA (uracil(747)-C(5))-methyltransferase RlmC (376 aa).

4 residues coordinate [4Fe-4S] cluster: cysteine 3, cysteine 11, cysteine 14, and cysteine 87. Residues glutamine 212, phenylalanine 241, glutamate 262, and asparagine 307 each coordinate S-adenosyl-L-methionine. Cysteine 334 acts as the Nucleophile in catalysis.

Belongs to the class I-like SAM-binding methyltransferase superfamily. RNA M5U methyltransferase family. RlmC subfamily.

It catalyses the reaction uridine(747) in 23S rRNA + S-adenosyl-L-methionine = 5-methyluridine(747) in 23S rRNA + S-adenosyl-L-homocysteine + H(+). Its function is as follows. Catalyzes the formation of 5-methyl-uridine at position 747 (m5U747) in 23S rRNA. This chain is 23S rRNA (uracil(747)-C(5))-methyltransferase RlmC, found in Yersinia pseudotuberculosis serotype O:1b (strain IP 31758).